The sequence spans 522 residues: Putative cysteine ligase BshC (522 aa).

The stretch at 436–469 (SWAQAEKAKALKQLEDIEKKLRKAEERKHDDVIK) forms a coiled coil.

The protein belongs to the BshC family.

In Cytophaga hutchinsonii (strain ATCC 33406 / DSM 1761 / CIP 103989 / NBRC 15051 / NCIMB 9469 / D465), this protein is Putative cysteine ligase BshC.